We begin with the raw amino-acid sequence, 105 residues long: Nitrogen fixation nifHD region GlnB-like protein 1 (105 aa).

Belongs to the P(II) protein family.

Its function is as follows. Could be involved in the regulation of nitrogen fixation. The chain is Nitrogen fixation nifHD region GlnB-like protein 1 (glnBA) from Methanobacterium ivanovii.